The following is a 245-amino-acid chain: Acetylglutamate kinase (245 aa).

Substrate-binding positions include glycine 41 to glycine 42, arginine 63, and asparagine 156.

Belongs to the acetylglutamate kinase family. ArgB subfamily.

Its subcellular location is the cytoplasm. It catalyses the reaction N-acetyl-L-glutamate + ATP = N-acetyl-L-glutamyl 5-phosphate + ADP. The protein operates within amino-acid biosynthesis; L-arginine biosynthesis; N(2)-acetyl-L-ornithine from L-glutamate: step 2/4. Its function is as follows. Catalyzes the ATP-dependent phosphorylation of N-acetyl-L-glutamate. This chain is Acetylglutamate kinase, found in Streptococcus gordonii (strain Challis / ATCC 35105 / BCRC 15272 / CH1 / DL1 / V288).